The following is an 872-amino-acid chain: Valine--tRNA ligase (872 aa).

The short motif at 46–56 (PNVTGKLHIGH) is the 'HIGH' region element. The 'KMSKS' region signature appears at 523–527 (KMSKS). An ATP-binding site is contributed by Lys-526. Residues 796–872 (IEIANDSFIN…KDKLKELTND (77 aa)) are a coiled coil.

Belongs to the class-I aminoacyl-tRNA synthetase family. ValS type 1 subfamily. As to quaternary structure, monomer.

It localises to the cytoplasm. The catalysed reaction is tRNA(Val) + L-valine + ATP = L-valyl-tRNA(Val) + AMP + diphosphate. Catalyzes the attachment of valine to tRNA(Val). As ValRS can inadvertently accommodate and process structurally similar amino acids such as threonine, to avoid such errors, it has a 'posttransfer' editing activity that hydrolyzes mischarged Thr-tRNA(Val) in a tRNA-dependent manner. This chain is Valine--tRNA ligase, found in Mycoplasma mycoides subsp. mycoides SC (strain CCUG 32753 / NCTC 10114 / PG1).